Reading from the N-terminus, the 439-residue chain is Ribosomal protein uS12 methylthiotransferase RimO (439 aa).

One can recognise an MTTase N-terminal domain in the interval Pro-5–Pro-115. The [4Fe-4S] cluster site is built by Cys-14, Cys-50, Cys-79, Cys-146, Cys-150, and Cys-153. The region spanning Leu-132–Asp-369 is the Radical SAM core domain. Residues Gln-372–Asp-439 enclose the TRAM domain.

The protein belongs to the methylthiotransferase family. RimO subfamily. [4Fe-4S] cluster is required as a cofactor.

It is found in the cytoplasm. It catalyses the reaction L-aspartate(89)-[ribosomal protein uS12]-hydrogen + (sulfur carrier)-SH + AH2 + 2 S-adenosyl-L-methionine = 3-methylsulfanyl-L-aspartate(89)-[ribosomal protein uS12]-hydrogen + (sulfur carrier)-H + 5'-deoxyadenosine + L-methionine + A + S-adenosyl-L-homocysteine + 2 H(+). Its function is as follows. Catalyzes the methylthiolation of an aspartic acid residue of ribosomal protein uS12. The protein is Ribosomal protein uS12 methylthiotransferase RimO of Francisella tularensis subsp. novicida (strain U112).